The chain runs to 248 residues: Triosephosphate isomerase (248 aa).

9 to 11 (NWK) is a binding site for substrate. The active-site Electrophile is His94. Catalysis depends on Glu166, which acts as the Proton acceptor. Substrate is bound by residues Gly172, Ser212, and 233–234 (GG).

The protein belongs to the triosephosphate isomerase family. As to quaternary structure, homodimer.

It localises to the cytoplasm. The enzyme catalyses D-glyceraldehyde 3-phosphate = dihydroxyacetone phosphate. Its pathway is carbohydrate biosynthesis; gluconeogenesis. It participates in carbohydrate degradation; glycolysis; D-glyceraldehyde 3-phosphate from glycerone phosphate: step 1/1. Its function is as follows. Involved in the gluconeogenesis. Catalyzes stereospecifically the conversion of dihydroxyacetone phosphate (DHAP) to D-glyceraldehyde-3-phosphate (G3P). This Clostridium botulinum (strain Okra / Type B1) protein is Triosephosphate isomerase.